The following is a 611-amino-acid chain: Leucine aminopeptidase 2 (611 aa).

Residues 135 to 137 (QCQ) and 265 to 270 (PYGGME) each bind a peptide. His-294 is a Zn(2+) binding site. Glu-295 serves as the catalytic Proton acceptor. The Zn(2+) site is built by His-298 and Glu-317. The Proton donor role is filled by Tyr-383.

This sequence belongs to the peptidase M1 family. Requires Zn(2+) as cofactor.

It localises to the cytoplasm. The protein resides in the nucleus. It catalyses the reaction an epoxide + H2O = an ethanediol. Functionally, aminopeptidase that preferentially cleaves di- and tripeptides. Also has low epoxide hydrolase activity (in vitro). Can hydrolyze the epoxide leukotriene LTA(4) but it forms preferentially 5,6-dihydroxy-7,9,11,14-eicosatetraenoic acid rather than the cytokine leukotriene B(4) as the product compared to the homologous mammalian enzyme (in vitro). The chain is Leucine aminopeptidase 2 from Chaetomium globosum (strain ATCC 6205 / CBS 148.51 / DSM 1962 / NBRC 6347 / NRRL 1970) (Soil fungus).